The primary structure comprises 482 residues: Cardiolipin synthase (482 aa).

2 consecutive transmembrane segments (helical) span residues 4-24 (LAYLLVILLILNVFFAAVTVF) and 34-54 (WAWLLVLTFVPIFGFIIYLIF). 2 consecutive PLD phosphodiesterase domains span residues 217 to 244 (LNYRNHRKLAIIDGDVGYIGGFNIGDEY) and 395 to 422 (DNGFIHAKTLVVDGEIASVGTANMDFRS). Residues His-222, Lys-224, Asp-229, His-400, Lys-402, and Asp-407 contribute to the active site.

The protein belongs to the phospholipase D family. Cardiolipin synthase subfamily.

It localises to the cell membrane. The catalysed reaction is 2 a 1,2-diacyl-sn-glycero-3-phospho-(1'-sn-glycerol) = a cardiolipin + glycerol. In terms of biological role, catalyzes the reversible phosphatidyl group transfer from one phosphatidylglycerol molecule to another to form cardiolipin (CL) (diphosphatidylglycerol) and glycerol. The protein is Cardiolipin synthase (cls) of Listeria monocytogenes serotype 4a (strain HCC23).